Here is a 155-residue protein sequence, read N- to C-terminus: Snaclec agkicetin-C subunit alpha (155 aa).

An N-terminal signal peptide occupies residues 1–23 (MGRFIFVSFGLLVVFLSLSGTAA). Disulfide bonds link cysteine 25–cysteine 36, cysteine 53–cysteine 149, and cysteine 124–cysteine 141. The 119-residue stretch at 32 to 150 (YIRFCYQPFK…CGLKHVFMCK (119 aa)) folds into the C-type lectin domain.

Belongs to the snaclec family. As to quaternary structure, heterodimer of subunits alpha and beta; disulfide-linked. In terms of tissue distribution, expressed by the venom gland.

The protein resides in the secreted. In terms of biological role, is a potent glycoprotein Ibalpha (GP1BA) antagonist. Concentration-dependently inhibits botrocetin-, ristocetin- and low dose thrombin-induced platelet aggregation. Inhibits platelet adhesion only through inhibiting the vWF interaction with GP1BA, but has minimal effect on other platelet receptors, such as alpha-IIb/beta-3 (ITGA2B/ITGB3) or alpha-2/beta-1 (ITGA2/ITGB1). Causes an instant severe thrombocytopenia in rats and is not lethal to mice. In Deinagkistrodon acutus (Hundred-pace snake), this protein is Snaclec agkicetin-C subunit alpha.